Here is a 268-residue protein sequence, read N- to C-terminus: MERYQQLFSQLAARHEGAFVPFVTLGDPNPTLSLRIIDTLIDAGADALELGIPFSDPLADGPTIQNANLRAFSSGVTPAHCFEMLATIRQKYPAIPIGLLMYANLVYNEGIDAFYAHCAEVGIDSVLVADVPLQESLPFRQAALRHNVAPIVICPPNSDDALLREIASHGRGYTYLLARAGVTGSEKRANTPLKHLIDTLKEYHAAPTLQGFGISEPGQVRTALHAGTAGAISGSAIVRIIEKHEDNPAVMLEQLAQFVRELKAATRG.

Active-site proton acceptor residues include Glu-49 and Asp-60.

It belongs to the TrpA family. In terms of assembly, tetramer of two alpha and two beta chains.

It catalyses the reaction (1S,2R)-1-C-(indol-3-yl)glycerol 3-phosphate + L-serine = D-glyceraldehyde 3-phosphate + L-tryptophan + H2O. Its pathway is amino-acid biosynthesis; L-tryptophan biosynthesis; L-tryptophan from chorismate: step 5/5. In terms of biological role, the alpha subunit is responsible for the aldol cleavage of indoleglycerol phosphate to indole and glyceraldehyde 3-phosphate. This is Tryptophan synthase alpha chain from Sodalis glossinidius (strain morsitans).